A 501-amino-acid polypeptide reads, in one-letter code: MNTMSHKFVLALDEGTTSARAILFDSDLNIVNIGQYEFPQHYPQPGYVEHDPEEIWEAQMLAVKKAISKIDAKQIVAIGITNQRETTVLWDAKSGKPVYNAIVWQDRRTSPITDWLKANYFKMIKDKTGLVPDPYFSASKIKWILDNVSNVREKAERGEIKFGTIDTYLIWRLTNGKAHVTDYSNASRTMLFNINKLEWDREILELLKIPESILPEVKPSSEIYGYSEALGNLIPISGDAGDQQAALFGQVAFNVGEIKATYGTGSFILMNIGNNPIRSENLLTTIAWGLEKNKAKYALEGSIFITGAAVQWFRDGLRAIDVSDEIEPLASSVEDNGGVYFVPAFVGLGAPYWDPYARGLIIGITRGTTKAHIARAILESMAYQTRDVIEVMQKEAGISINSLKVDGGAAKDNLLMQFQADILGIKVIRPKVMETTSMGVAMLAGLGVGLWNSLEELRNIWKVDKEFIPSMSEEKRRALYSGWKEAVKRAMGWAKVVGGQV.

Residue T16 participates in ADP binding. Residues T16, T17, and S18 each contribute to the ATP site. T16 lines the sn-glycerol 3-phosphate pocket. R20 serves as a coordination point for ADP. Sn-glycerol 3-phosphate-binding residues include R84, E85, Y135, and D242. Glycerol contacts are provided by R84, E85, Y135, D242, and Q243. T264 and G307 together coordinate ADP. Positions 264, 307, 311, and 408 each coordinate ATP. G408 lines the ADP pocket.

Belongs to the FGGY kinase family.

The catalysed reaction is glycerol + ATP = sn-glycerol 3-phosphate + ADP + H(+). Its pathway is polyol metabolism; glycerol degradation via glycerol kinase pathway; sn-glycerol 3-phosphate from glycerol: step 1/1. Key enzyme in the regulation of glycerol uptake and metabolism. Catalyzes the phosphorylation of glycerol to yield sn-glycerol 3-phosphate. This Saccharolobus islandicus (strain M.14.25 / Kamchatka #1) (Sulfolobus islandicus) protein is Glycerol kinase.